A 1172-amino-acid chain; its full sequence is MVSGVGGSGGGRGGGRGGEEEPSSSHTPNNRRGGEQAQSSGTKSLRPRSNTESMSKAIQQYTVDARLHAVFEQSGESGKSFDYSQSLKTTTYGSSVPEQQITAYLSRIQRGGYIQPFGCMIAVDESSFRIIGYSENAREMLGIMPQSVPTLEKPEILAMGTDVRSLFTSSSSILLERAFVAREITLLNPVWIHSKNTGKPFYAILHRIDVGVVIDLEPARTEDPALSIAGAVQSQKLAVRAISQLQALPGGDIKLLCDTVVESVRDLTGYDRVMVYKFHEDEHGEVVAESKRDDLEPYIGLHYPATDIPQASRFLFKQNRVRMIVDCNATPVLVVQDDRLTQSMCLVGSTLRAPHGCHSQYMANMGSIASLAMAVIINGNEDDGSNVASGRSSMRLWGLVVCHHTSSRCIPFPLRYACEFLMQAFGLQLNMELQLALQMSEKRVLRTQTLLCDMLLRDSPAGIVTQSPSIMDLVKCDGAAFLYHGKYYPLGVAPSEVQIKDVVEWLLANHADSTGLSTDSLGDAGYPGAAALGDAVCGMAVAYITKRDFLFWFRSHTAKEIKWGGAKHHPEDKDDGQRMHPRSSFQAFLEVVKSRSQPWETAEMDAIHSLQLILRDSFKESEAAMNSKVVDGVVQPCRDMAGEQGIDELGAVAREMVRLIETATVPIFAVDAGGCINGWNAKIAELTGLSVEEAMGKSLVSDLIYKENEATVNKLLSRALRGDEEKNVEVKLKTFSPELQGKAVFVVVNACSSKDYLNNIVGVCFVGQDVTSQKIVMDKFINIQGDYKAIVHSPNPLIPPIFAADENTCCLEWNMAMEKLTGWSRSEVIGKMIVGEVFGSCCMLKGPDALTKFMIVLHNAIGGQDTDKFPFPFFDRNGKFVQALLTANKRVSLEGKVIGAFCFLQIPSPELQQALAVQRRQDTECFTKAKELAYICQVIKNPLSGMRFANSLLEATDLNEDQKQLLETSVSCEKQISRIVGDMDLESIEDGSFVLKREEFFLGSVINAIVSQAMFLLRDRGLQLIRDIPEEIKSIEVFGDQIRIQQLLAEFLLSIIRYAPSQEWVEIHLSQLSKQMADGFAAIRTEFRMACPGEGLPPELVRDMFHSSRWTSPEGLGLSVCRKILKLMNGEVQYIRESERSYFLIILELPVPRKRPLSTASGSGDMMLMMPY.

Positions 1-16 (MVSGVGGSGGGRGGGR) are enriched in gly residues. The interval 1–54 (MVSGVGGSGGGRGGGRGGEEEPSSSHTPNNRRGGEQAQSSGTKSLRPRSNTESM) is disordered. Residues 24-54 (SSHTPNNRRGGEQAQSSGTKSLRPRSNTESM) are compositionally biased toward polar residues. One can recognise a GAF domain in the interval 252 to 433 (DIKLLCDTVV…AFGLQLNMEL (182 aa)). Phytochromobilin is bound at residue Cys357. 2 PAS domains span residues 652–723 (VARE…LRGD) and 786–857 (DYKA…MIVL). In terms of domain architecture, Histidine kinase spans 934–1153 (YICQVIKNPL…LIILELPVPR (220 aa)).

The protein belongs to the phytochrome family. In terms of assembly, homodimer. Interacts with ADO1 and PKS4. Stabilized by interactions with PAPP5 and FYPP3 which are enhanced in the phosphorylated Pfr form. Interacts with VOZ1 and VOZ2. Binds, via its photosensory domain, to PTAC12/HMR/PAP5 when photoactivated; this interaction stimulates its localization to photobodies. Interacts with CRY1 specifically when in the dark/far-red (Pr) state, but not when red light-activated (Pfr). Interacts with PIF4 and PIF5 in response to low blue light (LBL). Component of a red light-dependent nuclear complex made of PHL, PHYB and CO. Interacts directly with PHL. Binds to UNE10/PIF8 when red light-activated (Pfr). When light-activated, interacts with PCH1 and PCHL. Associated with DRT111/RSN2/SFPS, SMP2 and SWAP1 in nuclear photobodies upon response to red light (Pfr form). Contains one covalently linked phytochromobilin chromophore. Expressed in fruits, flowers, leaves, stems, seedlings and roots.

Its subcellular location is the cytoplasm. The protein localises to the nucleus. The protein resides in the nucleoplasm. It is found in the nucleus speckle. Functionally, regulatory photoreceptor which exists in two forms that are reversibly interconvertible by light: the Pr form that absorbs maximally in the red region of the spectrum and the Pfr form that absorbs maximally in the far-red region. Photoconversion of Pr to Pfr induces an array of morphogenetic responses, whereas reconversion of Pfr to Pr cancels the induction of those responses. Pfr controls the expression of a number of nuclear genes including those encoding the small subunit of ribulose-bisphosphate carboxylase, chlorophyll A/B binding protein, protochlorophyllide reductase, rRNA, etc. It also controls the expression of its own gene(s) in a negative feedback fashion. Involved in the flowering time regulation. Involved in light-regulated circadian phase control that triggers stomatal aperture, stomatal conductance, and CO(2) assimilation. Implicated in red light perception, and, to a lower extent, in blue light signaling. Controls thermomorphogenesis in the daytime and regulates temperature responses by associating with the promoters of key target genes in a temperature-dependent manner and subsequently repressing their expression in a PIF4-dependent manner (temperature-responsive transcriptional regulator); this process requires PTAC12/HMR/PAP5 (transcriptional activator). Thermal timer that integrates temperature information over the course of the night. Detabilizes UNE10/PIF8 in red light. This Arabidopsis thaliana (Mouse-ear cress) protein is Phytochrome B.